The chain runs to 407 residues: [Pyruvate dehydrogenase (acetyl-transferring)] kinase isozyme 2, mitochondrial (407 aa).

The Histidine kinase domain occupies 135–364; the sequence is LEYKDTYGDD…DAVIYLKALS (230 aa). Phosphotyrosine occurs at positions 215 and 216. ATP-binding positions include 251–258, aspartate 290, 309–310, and 325–330; these read ELFKNAMR, ST, and GFGYGL. Lysine 376 carries the N6-succinyllysine modification.

It belongs to the PDK/BCKDK protein kinase family. As to quaternary structure, homodimer, and heterodimer with PDK1. Interacts with the pyruvate dehydrogenase complex subunit DLAT, and is part of the multimeric pyruvate dehydrogenase complex that contains multiple copies of pyruvate dehydrogenase (E1), dihydrolipoamide acetyltransferase (DLAT, E2) and lipoamide dehydrogenase (DLD, E3). As to expression, detected in heart (at protein level).

Its subcellular location is the mitochondrion matrix. The catalysed reaction is L-seryl-[pyruvate dehydrogenase E1 alpha subunit] + ATP = O-phospho-L-seryl-[pyruvate dehydrogenase E1 alpha subunit] + ADP + H(+). Its function is as follows. Kinase that plays a key role in the regulation of glucose and fatty acid metabolism and homeostasis via phosphorylation of the pyruvate dehydrogenase subunits PDHA1 and PDHA2. This inhibits pyruvate dehydrogenase activity, and thereby regulates metabolite flux through the tricarboxylic acid cycle, down-regulates aerobic respiration and inhibits the formation of acetyl-coenzyme A from pyruvate. Inhibition of pyruvate dehydrogenase decreases glucose utilization and increases fat metabolism. Mediates cellular responses to insulin. Plays an important role in maintaining normal blood glucose levels and in metabolic adaptation to nutrient availability. Via its regulation of pyruvate dehydrogenase activity, plays an important role in maintaining normal blood pH and in preventing the accumulation of ketone bodies under starvation. Plays a role in the regulation of cell proliferation and in resistance to apoptosis under oxidative stress. Plays a role in p53/TP53-mediated apoptosis. In Mus musculus (Mouse), this protein is [Pyruvate dehydrogenase (acetyl-transferring)] kinase isozyme 2, mitochondrial (Pdk2).